A 339-amino-acid chain; its full sequence is Putative adenosine/adenine deaminase (339 aa).

The Zn(2+) site is built by His16, His18, and His200. Residue His18 participates in substrate binding. The active-site Proton donor is the Glu203. Asp281 provides a ligand contact to Zn(2+). Asp282 is a substrate binding site.

The protein belongs to the metallo-dependent hydrolases superfamily. Adenosine and AMP deaminases family. It depends on Zn(2+) as a cofactor.

Functionally, putative nucleoside deaminase. May catalyze the hydrolytic deamination of adenosine or some similar substrate and play a role in purine metabolism. The polypeptide is Putative adenosine/adenine deaminase (Streptomyces virginiae (Streptomyces cinnamonensis)).